Reading from the N-terminus, the 410-residue chain is Provicilin (410 aa).

The N-terminal stretch at 1 to 15 (MLLAIAFLASVCVSS) is a signal peptide. Positions 23–181 (FIFKSNRFQT…AFNTNYEEIE (159 aa)) constitute a Cupin type-1 1 domain. Disordered stretches follow at residues 223 to 242 (SKNA…GPFN) and 312 to 331 (QRNE…EEET). Residues 225–238 (NAKSSSKKSVSSES) are compositionally biased toward low complexity. One can recognise a Cupin type-1 2 domain in the interval 241-409 (FNLRSRNPIY…AFPGSSHEVD (169 aa)). Asparagine 359 carries an N-linked (GlcNAc...) asparagine glycan.

It belongs to the 7S seed storage protein family.

Its subcellular location is the vacuole. The protein resides in the aleurone grain. In terms of biological role, seed storage protein. The protein is Provicilin of Pisum sativum (Garden pea).